A 498-amino-acid chain; its full sequence is ATP synthase subunit beta, chloroplastic (498 aa).

ATP is bound at residue 172–179 (GGAGVGKT).

The protein belongs to the ATPase alpha/beta chains family. In terms of assembly, F-type ATPases have 2 components, CF(1) - the catalytic core - and CF(0) - the membrane proton channel. CF(1) has five subunits: alpha(3), beta(3), gamma(1), delta(1), epsilon(1). CF(0) has four main subunits: a(1), b(1), b'(1) and c(9-12).

Its subcellular location is the plastid. It is found in the chloroplast thylakoid membrane. It catalyses the reaction ATP + H2O + 4 H(+)(in) = ADP + phosphate + 5 H(+)(out). In terms of biological role, produces ATP from ADP in the presence of a proton gradient across the membrane. The catalytic sites are hosted primarily by the beta subunits. This Hyophorbe lagenicaulis (Bottle palm) protein is ATP synthase subunit beta, chloroplastic.